A 100-amino-acid polypeptide reads, in one-letter code: MGRVIRTRPVSGDLDRVFRDVCENNGVKVASAQLNRIESVFHRLSAFPRLGRDRSDLRPGLRTFSVKPWQVLYRLNGEDVVILRILDGRMNLAAQLGKKT.

It belongs to the RelE toxin family.

In terms of biological role, toxic component of a type II toxin-antitoxin (TA) system. Its toxic effect is neutralized by coexpression with cognate antitoxin ParD3 but no other ParD or RelB antitoxin. The protein is Toxin ParE3 (parE3) of Caulobacter vibrioides (strain ATCC 19089 / CIP 103742 / CB 15) (Caulobacter crescentus).